Reading from the N-terminus, the 123-residue chain is Small ribosomal subunit protein uS13 (123 aa).

The protein belongs to the universal ribosomal protein uS13 family. In terms of assembly, part of the 30S ribosomal subunit. Forms a loose heterodimer with protein S19. Forms two bridges to the 50S subunit in the 70S ribosome.

Its function is as follows. Located at the top of the head of the 30S subunit, it contacts several helices of the 16S rRNA. In the 70S ribosome it contacts the 23S rRNA (bridge B1a) and protein L5 of the 50S subunit (bridge B1b), connecting the 2 subunits; these bridges are implicated in subunit movement. Contacts the tRNAs in the A and P-sites. The polypeptide is Small ribosomal subunit protein uS13 (Neorickettsia sennetsu (strain ATCC VR-367 / Miyayama) (Ehrlichia sennetsu)).